The sequence spans 127 residues: Modulator protein MzrA (127 aa).

The Cytoplasmic portion of the chain corresponds to 1–10 (MGLQNMTLRR). A helical transmembrane segment spans residues 11–31 (FTLSMSALLLLCALLWLWAAL). The Periplasmic segment spans residues 32-127 (EQQESSLAIR…RLRDAPHRLG (96 aa)).

This sequence belongs to the MzrA family. Interacts with EnvZ.

It localises to the cell inner membrane. Its function is as follows. Modulates the activity of the EnvZ/OmpR two-component regulatory system, probably by directly modulating EnvZ enzymatic activity and increasing stability of phosphorylated OmpR. The chain is Modulator protein MzrA from Enterobacter lignolyticus (strain SCF1).